A 541-amino-acid polypeptide reads, in one-letter code: 2-isopropylmalate synthase (541 aa).

One can recognise a Pyruvate carboxyltransferase domain in the interval 8–284; the sequence is VIIFDTTLRD…LTNINTRHIY (277 aa). Asp-17, His-208, His-210, and Asn-244 together coordinate Mn(2+). A regulatory domain region spans residues 408 to 541; the sequence is RLELVQVSCG…DQPTEVVAGS (134 aa).

This sequence belongs to the alpha-IPM synthase/homocitrate synthase family. LeuA type 1 subfamily. In terms of assembly, homodimer. Mn(2+) is required as a cofactor.

The protein localises to the cytoplasm. The catalysed reaction is 3-methyl-2-oxobutanoate + acetyl-CoA + H2O = (2S)-2-isopropylmalate + CoA + H(+). It participates in amino-acid biosynthesis; L-leucine biosynthesis; L-leucine from 3-methyl-2-oxobutanoate: step 1/4. Its function is as follows. Catalyzes the condensation of the acetyl group of acetyl-CoA with 3-methyl-2-oxobutanoate (2-ketoisovalerate) to form 3-carboxy-3-hydroxy-4-methylpentanoate (2-isopropylmalate). In Trichodesmium erythraeum (strain IMS101), this protein is 2-isopropylmalate synthase.